A 410-amino-acid polypeptide reads, in one-letter code: Platelet-activating factor acetylhydrolase IB subunit alpha (410 aa).

Residues 1 to 38 (MVLSQRQRDELNRAIADYLRSNGYEEAYSVFKKEAELD) are required for self-association and interaction with PAFAH1B2 and PAFAH1B3. Residues 1–66 (MVLSQRQRDE…SVIRLQKKVM (66 aa)) are interaction with NDE1. The segment at 1 to 102 (MVLSQRQRDE…EWIPRPPEKY (102 aa)) is interaction with NDEL1. Positions 7–39 (QRDELNRAIADYLRSNGYEEAYSVFKKEAELDM) constitute a LisH domain. An N6-acetyllysine modification is found at Lys53. Residues 56-82 (TSVIRLQKKVMELESKLNEAKEEFTSG) adopt a coiled-coil conformation. Residues 83–410 (GPLGQKRDPK…DQTVKVWECR (328 aa)) are interaction with dynein and dynactin. 7 WD repeats span residues 106 to 147 (GHRS…RTLK), 148 to 187 (GHTDSVQDISFDHSGKLLASCSADMTIKLWDFQGFECIRT), 190 to 229 (GHDHNVSSVAIMPNGDHIVSAARDKTIKMWEVQTGYCVKT), 232 to 271 (GHREWVRMVRPNQDGTLIASCSNDQTVRVWVVATKECKAE), 274 to 333 (EHEH…CLMT), 336 to 377 (GHDN…KTLN), and 378 to 410 (AHEHFVTSLDFHKTAPYVVTGSVDQTVKVWECR). The residue at position 109 (Ser109) is a Phosphoserine. The interaction with DCX stretch occupies residues 367-409 (YKNKRCMKTLNAHEHFVTSLDFHKTAPYVVTGSVDQTVKVWEC). The interval 388-410 (FHKTAPYVVTGSVDQTVKVWECR) is interaction with NDEL1.

It belongs to the WD repeat LIS1/nudF family. As to quaternary structure, can self-associate. Component of the cytosolic PAF-AH (I) heterotetrameric enzyme, which is composed of PAFAH1B1 (beta), PAFAH1B2 (alpha2) and PAFAH1B3 (alpha1) subunits. The catalytic activity of the enzyme resides in the alpha1 (PAFAH1B3) and alpha2 (PAFAH1B2) subunits, whereas the beta subunit (PAFAH1B1) has regulatory activity. Trimer formation is not essential for the catalytic activity. Interacts with the catalytic dimer of PAF-AH (I) heterotetrameric enzyme: interacts with PAFAH1B2 homodimer (alpha2/alpha2 homodimer), PAFAH1B3 homodimer (alpha1/alpha1 homodimer) and PAFAH1B2-PAFAH1B3 heterodimer (alpha2/alpha1 heterodimer). Interacts with DCX, dynein, dynactin, IQGAP1, KATNB1, NDE1, NDEL1, NUDC and RSN. Interacts with DISC1, and this interaction is enhanced by NDEL1. Interacts with DAB1 when DAB1 is phosphorylated in response to RELN/reelin signaling. Interacts with INTS13. Interacts with DCDC1.

It localises to the cytoplasm. The protein resides in the cytoskeleton. It is found in the microtubule organizing center. Its subcellular location is the centrosome. The protein localises to the spindle. It localises to the nucleus membrane. Functionally, regulatory subunit (beta subunit) of the cytosolic type I platelet-activating factor (PAF) acetylhydrolase (PAF-AH (I)), an enzyme that catalyzes the hydrolyze of the acetyl group at the sn-2 position of PAF and its analogs and participates in PAF inactivation. Regulates the PAF-AH (I) activity in a catalytic dimer composition-dependent manner. Positively regulates the activity of the minus-end directed microtubule motor protein dynein. May enhance dynein-mediated microtubule sliding by targeting dynein to the microtubule plus end. Required for several dynein- and microtubule-dependent processes such as the maintenance of Golgi integrity, the peripheral transport of microtubule fragments and the coupling of the nucleus and centrosome. Required during brain development for the proliferation of neuronal precursors and the migration of newly formed neurons from the ventricular/subventricular zone toward the cortical plate. Neuronal migration involves a process called nucleokinesis, whereby migrating cells extend an anterior process into which the nucleus subsequently translocates. During nucleokinesis dynein at the nuclear surface may translocate the nucleus towards the centrosome by exerting force on centrosomal microtubules. Also required for proper activation of Rho GTPases and actin polymerization at the leading edge of locomoting cerebellar neurons and postmigratory hippocampal neurons in response to calcium influx triggered via NMDA receptors. May also play a role in other forms of cell locomotion including the migration of fibroblasts during wound healing. Required for dynein recruitment to microtubule plus ends and BICD2-bound cargos. May modulate the Reelin pathway through interaction of the PAF-AH (I) catalytic dimer with VLDLR. The sequence is that of Platelet-activating factor acetylhydrolase IB subunit alpha from Sus scrofa (Pig).